The following is a 235-amino-acid chain: Phosphoribosylaminoimidazole-succinocarboxamide synthase (235 aa).

Belongs to the SAICAR synthetase family.

The catalysed reaction is 5-amino-1-(5-phospho-D-ribosyl)imidazole-4-carboxylate + L-aspartate + ATP = (2S)-2-[5-amino-1-(5-phospho-beta-D-ribosyl)imidazole-4-carboxamido]succinate + ADP + phosphate + 2 H(+). Its pathway is purine metabolism; IMP biosynthesis via de novo pathway; 5-amino-1-(5-phospho-D-ribosyl)imidazole-4-carboxamide from 5-amino-1-(5-phospho-D-ribosyl)imidazole-4-carboxylate: step 1/2. This chain is Phosphoribosylaminoimidazole-succinocarboxamide synthase, found in Sulfolobus acidocaldarius (strain ATCC 33909 / DSM 639 / JCM 8929 / NBRC 15157 / NCIMB 11770).